The sequence spans 122 residues: Large ribosomal subunit protein uL14 (122 aa).

The protein belongs to the universal ribosomal protein uL14 family. In terms of assembly, part of the 50S ribosomal subunit. Forms a cluster with proteins L3 and L19. In the 70S ribosome, L14 and L19 interact and together make contacts with the 16S rRNA in bridges B5 and B8.

Functionally, binds to 23S rRNA. Forms part of two intersubunit bridges in the 70S ribosome. In Gemmatimonas aurantiaca (strain DSM 14586 / JCM 11422 / NBRC 100505 / T-27), this protein is Large ribosomal subunit protein uL14.